Here is a 164-residue protein sequence, read N- to C-terminus: SsrA-binding protein (164 aa).

A disordered region spans residues H143–R164. The segment covering K145–I158 has biased composition (basic and acidic residues).

It belongs to the SmpB family.

It is found in the cytoplasm. Functionally, required for rescue of stalled ribosomes mediated by trans-translation. Binds to transfer-messenger RNA (tmRNA), required for stable association of tmRNA with ribosomes. tmRNA and SmpB together mimic tRNA shape, replacing the anticodon stem-loop with SmpB. tmRNA is encoded by the ssrA gene; the 2 termini fold to resemble tRNA(Ala) and it encodes a 'tag peptide', a short internal open reading frame. During trans-translation Ala-aminoacylated tmRNA acts like a tRNA, entering the A-site of stalled ribosomes, displacing the stalled mRNA. The ribosome then switches to translate the ORF on the tmRNA; the nascent peptide is terminated with the 'tag peptide' encoded by the tmRNA and targeted for degradation. The ribosome is freed to recommence translation, which seems to be the essential function of trans-translation. The polypeptide is SsrA-binding protein (Prochlorococcus marinus (strain MIT 9312)).